Here is a 192-residue protein sequence, read N- to C-terminus: Peptidyl-tRNA hydrolase (192 aa).

A tRNA-binding site is contributed by tyrosine 14. Histidine 19 acts as the Proton acceptor in catalysis. TRNA is bound by residues tyrosine 64, asparagine 66, and asparagine 112.

The protein belongs to the PTH family. As to quaternary structure, monomer.

It localises to the cytoplasm. It carries out the reaction an N-acyl-L-alpha-aminoacyl-tRNA + H2O = an N-acyl-L-amino acid + a tRNA + H(+). Functionally, hydrolyzes ribosome-free peptidyl-tRNAs (with 1 or more amino acids incorporated), which drop off the ribosome during protein synthesis, or as a result of ribosome stalling. In terms of biological role, catalyzes the release of premature peptidyl moieties from peptidyl-tRNA molecules trapped in stalled 50S ribosomal subunits, and thus maintains levels of free tRNAs and 50S ribosomes. This Anaeromyxobacter dehalogenans (strain 2CP-C) protein is Peptidyl-tRNA hydrolase.